The following is a 126-amino-acid chain: Protein translocase subunit SecE (126 aa).

The next 3 helical transmembrane spans lie at 20–40, 42–62, and 97–117; these read WLAA…YGEM, VVVR…VAAT, and IVLA…GIMV.

The protein belongs to the SecE/SEC61-gamma family. Component of the Sec protein translocase complex. Heterotrimer consisting of SecY, SecE and SecG subunits. The heterotrimers can form oligomers, although 1 heterotrimer is thought to be able to translocate proteins. Interacts with the ribosome. Interacts with SecDF, and other proteins may be involved. Interacts with SecA.

The protein resides in the cell inner membrane. In terms of biological role, essential subunit of the Sec protein translocation channel SecYEG. Clamps together the 2 halves of SecY. May contact the channel plug during translocation. The sequence is that of Protein translocase subunit SecE from Vibrio alginolyticus.